Consider the following 254-residue polypeptide: Probable triosephosphate isomerase 2 (254 aa).

Asn-9 to Lys-11 is a binding site for substrate. Residue His-96 is the Electrophile of the active site. The active-site Proton acceptor is the Glu-168. 2 residues coordinate substrate: Gly-174 and Ser-212.

The protein belongs to the triosephosphate isomerase family. Homodimer.

It is found in the cytoplasm. The enzyme catalyses D-glyceraldehyde 3-phosphate = dihydroxyacetone phosphate. It functions in the pathway carbohydrate biosynthesis; gluconeogenesis. It participates in carbohydrate degradation; glycolysis; D-glyceraldehyde 3-phosphate from glycerone phosphate: step 1/1. Its function is as follows. Involved in the gluconeogenesis. Catalyzes stereospecifically the conversion of dihydroxyacetone phosphate (DHAP) to D-glyceraldehyde-3-phosphate (G3P). The polypeptide is Probable triosephosphate isomerase 2 (Listeria monocytogenes serotype 4b (strain F2365)).